The chain runs to 188 residues: Elongation factor P (188 aa).

This sequence belongs to the elongation factor P family.

The protein localises to the cytoplasm. It functions in the pathway protein biosynthesis; polypeptide chain elongation. Functionally, involved in peptide bond synthesis. Stimulates efficient translation and peptide-bond synthesis on native or reconstituted 70S ribosomes in vitro. Probably functions indirectly by altering the affinity of the ribosome for aminoacyl-tRNA, thus increasing their reactivity as acceptors for peptidyl transferase. This chain is Elongation factor P, found in Gluconobacter oxydans (strain 621H) (Gluconobacter suboxydans).